We begin with the raw amino-acid sequence, 387 residues long: Double C2-like domain-containing protein gamma (387 aa).

C2 domains are found at residues 83–209 and 243–376; these read ALGT…DICL and ERGR…ELWH. Ca(2+) is bound by residues aspartate 274, aspartate 280, aspartate 334, aspartate 336, and aspartate 342.

Ca(2+) is required as a cofactor.

In terms of biological role, may be involved in regulation of vesicular trafficking. In vitro, does not bind calcium and phospholipids. The polypeptide is Double C2-like domain-containing protein gamma (Doc2g) (Mus musculus (Mouse)).